Here is a 689-residue protein sequence, read N- to C-terminus: tRNA 5-methylaminomethyl-2-thiouridine biosynthesis bifunctional protein MnmC (689 aa).

Residues 1 to 245 (MNQRPIQTAT…KREMLTGTLP (245 aa)) are tRNA (mnm(5)s(2)U34)-methyltransferase. Positions 270–689 (IGGGIVSALT…RSPATQESSR (420 aa)) are FAD-dependent cmnm(5)s(2)U34 oxidoreductase.

This sequence in the N-terminal section; belongs to the methyltransferase superfamily. tRNA (mnm(5)s(2)U34)-methyltransferase family. The protein in the C-terminal section; belongs to the DAO family. It depends on FAD as a cofactor.

It is found in the cytoplasm. The enzyme catalyses 5-aminomethyl-2-thiouridine(34) in tRNA + S-adenosyl-L-methionine = 5-methylaminomethyl-2-thiouridine(34) in tRNA + S-adenosyl-L-homocysteine + H(+). Its function is as follows. Catalyzes the last two steps in the biosynthesis of 5-methylaminomethyl-2-thiouridine (mnm(5)s(2)U) at the wobble position (U34) in tRNA. Catalyzes the FAD-dependent demodification of cmnm(5)s(2)U34 to nm(5)s(2)U34, followed by the transfer of a methyl group from S-adenosyl-L-methionine to nm(5)s(2)U34, to form mnm(5)s(2)U34. The polypeptide is tRNA 5-methylaminomethyl-2-thiouridine biosynthesis bifunctional protein MnmC (Yersinia pseudotuberculosis serotype O:1b (strain IP 31758)).